Here is an 80-residue protein sequence, read N- to C-terminus: uncharacterized protein (80 aa).

Residues 10 to 29 (FVAREYPLVVVPFIYFVLFL) traverse the membrane as a helical segment.

It localises to the membrane. This is an uncharacterized protein from Saccharomyces cerevisiae (strain ATCC 204508 / S288c) (Baker's yeast).